A 318-amino-acid chain; its full sequence is Thymidylate synthase (318 aa).

DUMP-binding positions include Arg25 and Arg180–Arg181. Cys200 serves as the catalytic Nucleophile. Residues Arg220 to Asp223, Asn231, and His261 to Tyr263 contribute to the dUMP site. Asp223 is a binding site for (6R)-5,10-methylene-5,6,7,8-tetrahydrofolate. Residue Ala317 coordinates (6R)-5,10-methylene-5,6,7,8-tetrahydrofolate.

The protein belongs to the thymidylate synthase family. Bacterial-type ThyA subfamily. In terms of assembly, homodimer.

Its subcellular location is the cytoplasm. The enzyme catalyses dUMP + (6R)-5,10-methylene-5,6,7,8-tetrahydrofolate = 7,8-dihydrofolate + dTMP. It participates in pyrimidine metabolism; dTTP biosynthesis. Its function is as follows. Catalyzes the reductive methylation of 2'-deoxyuridine-5'-monophosphate (dUMP) to 2'-deoxythymidine-5'-monophosphate (dTMP) while utilizing 5,10-methylenetetrahydrofolate (mTHF) as the methyl donor and reductant in the reaction, yielding dihydrofolate (DHF) as a by-product. This enzymatic reaction provides an intracellular de novo source of dTMP, an essential precursor for DNA biosynthesis. The protein is Thymidylate synthase of Lactobacillus johnsonii (strain CNCM I-12250 / La1 / NCC 533).